Consider the following 238-residue polypeptide: Hydroxyacylglutathione hydrolase (238 aa).

Positions 52, 54, 56, 57, 108, 125, and 163 each coordinate Zn(2+).

It belongs to the metallo-beta-lactamase superfamily. Glyoxalase II family. Monomer. Zn(2+) serves as cofactor.

The enzyme catalyses an S-(2-hydroxyacyl)glutathione + H2O = a 2-hydroxy carboxylate + glutathione + H(+). It functions in the pathway secondary metabolite metabolism; methylglyoxal degradation; (R)-lactate from methylglyoxal: step 2/2. Functionally, thiolesterase that catalyzes the hydrolysis of S-D-lactoyl-glutathione to form glutathione and D-lactic acid. This is Hydroxyacylglutathione hydrolase from Haemophilus influenzae (strain ATCC 51907 / DSM 11121 / KW20 / Rd).